We begin with the raw amino-acid sequence, 181 residues long: Der GTPase-activating protein YihI (181 aa).

Disordered regions lie at residues 1–75 (MSRK…KKIP) and 145–181 (EPEA…DYKG). Over residues 32–43 (RLRKKDKKRKGL) the composition is skewed to basic residues. Residues 146–155 (PEAEEEFEEE) show a composition bias toward acidic residues. Over residues 156 to 165 (APVRKSRSDD) the composition is skewed to basic and acidic residues. The segment covering 166 to 181 (DLLADFEDFDMDDYKG) has biased composition (acidic residues).

The protein belongs to the YihI family. As to quaternary structure, interacts with Der.

A GTPase-activating protein (GAP) that modifies Der/EngA GTPase function. May play a role in ribosome biogenesis. This chain is Der GTPase-activating protein YihI, found in Vibrio vulnificus (strain CMCP6).